A 378-amino-acid chain; its full sequence is Calponin homolog OV9M (378 aa).

The span at 1–20 (MPAQPAQENAQDADDAQANA) shows a compositional bias: low complexity. Residues 1 to 35 (MPAQPAQENAQDADDAQANATMETRVAGQGQPKRV) are disordered. Calponin-like repeat units lie at residues 50–75 (IPSQ…RNTQ), 98–123 (VRLQ…RDVC), 151–176 (VRLQ…RRET), 197–222 (IPLQ…RRET), 244–269 (IPSQ…RWEV), 285–310 (VRLQ…RNTT), and 330–355 (IPSQ…RDVK). The disordered stretch occupies residues 175–194 (ETTKMTDSKHPDYDHERPDQ). Residues 230–256 (HPEYDPESSIDSSTIPSQMGSNKYASQ) are disordered. Residues 238–256 (SIDSSTIPSQMGSNKYASQ) show a composition bias toward polar residues. Residues 331-352 (PSQAGWNRGDSQKGMTGFGAPR) form a disordered region.

The protein belongs to the calponin family. As to expression, found in the longitudinal muscles below the hypodermis.

Functionally, could be involved in muscle contraction. The chain is Calponin homolog OV9M from Onchocerca volvulus.